Reading from the N-terminus, the 359-residue chain is Putative mannose-1-phosphate guanyltransferase (359 aa).

This sequence belongs to the transferase hexapeptide repeat family.

The catalysed reaction is alpha-D-mannose 1-phosphate + GTP + H(+) = GDP-alpha-D-mannose + diphosphate. The sequence is that of Putative mannose-1-phosphate guanyltransferase (mpg1) from Sulfolobus acidocaldarius (strain ATCC 33909 / DSM 639 / JCM 8929 / NBRC 15157 / NCIMB 11770).